The primary structure comprises 161 residues: Cyclic pyranopterin monophosphate synthase (161 aa).

Residues 73 to 75 (LCH) and 110 to 111 (ME) each bind substrate. Residue Asp125 is part of the active site.

This sequence belongs to the MoaC family. In terms of assembly, homohexamer; trimer of dimers.

The enzyme catalyses (8S)-3',8-cyclo-7,8-dihydroguanosine 5'-triphosphate = cyclic pyranopterin phosphate + diphosphate. Its pathway is cofactor biosynthesis; molybdopterin biosynthesis. Catalyzes the conversion of (8S)-3',8-cyclo-7,8-dihydroguanosine 5'-triphosphate to cyclic pyranopterin monophosphate (cPMP). This chain is Cyclic pyranopterin monophosphate synthase, found in Pseudomonas syringae pv. syringae (strain B728a).